We begin with the raw amino-acid sequence, 114 residues long: Ribosome-binding factor A (114 aa).

It belongs to the RbfA family. Monomer. Binds 30S ribosomal subunits, but not 50S ribosomal subunits or 70S ribosomes.

It localises to the cytoplasm. Its function is as follows. One of several proteins that assist in the late maturation steps of the functional core of the 30S ribosomal subunit. Associates with free 30S ribosomal subunits (but not with 30S subunits that are part of 70S ribosomes or polysomes). Required for efficient processing of 16S rRNA. May interact with the 5'-terminal helix region of 16S rRNA. In Listeria monocytogenes serotype 4b (strain F2365), this protein is Ribosome-binding factor A.